A 406-amino-acid chain; its full sequence is Calsequestrin-1 (406 aa).

The N-terminal stretch at 1-34 is a signal peptide; that stretch reads MRATDRMGARAVSKLRLALLFVLVLGTPRSGVQG. Tyr43 carries the phosphotyrosine modification. Ser81 carries the phosphoserine modification. Thr124 carries the phosphothreonine modification. Residue Ser216 is modified to Phosphoserine. Asn350 carries N-linked (GlcNAc...) asparagine glycosylation. The segment at 382 to 406 is disordered; the sequence is EGEINTEDDDDDDDDDDDDDDDDDD.

Belongs to the calsequestrin family. In terms of assembly, monomer; increases in response to a depletion of intracellular calcium. Homodimer. Homotetramer and homopolymer. Can form linear homooligomers. Ca(2+) ions promote oligomerization. Interacts (via C-terminal end and preferentially with the monomeric form) with STIM1; this interaction increases in response to a depletion of intracellular calcium, decreases both STIM1 aggregation and clustering, interaction of STIM1 with ORAI1 and store-operated Ca(2+) entry (SOCE) activity. Interacts with ASPH and TRDN. N-glycosylated. In terms of tissue distribution, detected in skeletal muscle and in smooth muscle from vas deferens, aorta and stomach (at protein level).

Its subcellular location is the endoplasmic reticulum. It localises to the sarcoplasmic reticulum. It is found in the sarcoplasmic reticulum lumen. The protein localises to the sarcoplasmic reticulum membrane. The protein resides in the mitochondrion matrix. Functionally, calsequestrin is a high-capacity, moderate affinity, calcium-binding protein and thus acts as an internal calcium store in muscle. Calcium ions are bound by clusters of acidic residues at the protein surface, often at the interface between subunits. Can bind around 80 Ca(2+) ions. Regulates the release of lumenal Ca(2+) via the calcium release channel RYR1; this plays an important role in triggering muscle contraction. Negatively regulates store-operated Ca(2+) entry (SOCE) activity. This chain is Calsequestrin-1 (Casq1), found in Rattus norvegicus (Rat).